The primary structure comprises 335 residues: 4-hydroxy-3-methylbut-2-enyl diphosphate reductase (335 aa).

[4Fe-4S] cluster is bound at residue Cys-21. (2E)-4-hydroxy-3-methylbut-2-enyl diphosphate-binding residues include His-50 and His-86. Residues His-50 and His-86 each coordinate dimethylallyl diphosphate. His-50 and His-86 together coordinate isopentenyl diphosphate. Cys-108 contributes to the [4Fe-4S] cluster binding site. His-136 is a binding site for (2E)-4-hydroxy-3-methylbut-2-enyl diphosphate. His-136 lines the dimethylallyl diphosphate pocket. His-136 contacts isopentenyl diphosphate. Glu-138 serves as the catalytic Proton donor. (2E)-4-hydroxy-3-methylbut-2-enyl diphosphate is bound at residue Thr-177. Cys-207 is a binding site for [4Fe-4S] cluster. Residues Ser-235, Ser-236, Asn-237, and Ser-280 each coordinate (2E)-4-hydroxy-3-methylbut-2-enyl diphosphate. The dimethylallyl diphosphate site is built by Ser-235, Ser-236, Asn-237, and Ser-280. Ser-235, Ser-236, Asn-237, and Ser-280 together coordinate isopentenyl diphosphate.

It belongs to the IspH family. [4Fe-4S] cluster is required as a cofactor.

The enzyme catalyses isopentenyl diphosphate + 2 oxidized [2Fe-2S]-[ferredoxin] + H2O = (2E)-4-hydroxy-3-methylbut-2-enyl diphosphate + 2 reduced [2Fe-2S]-[ferredoxin] + 2 H(+). It carries out the reaction dimethylallyl diphosphate + 2 oxidized [2Fe-2S]-[ferredoxin] + H2O = (2E)-4-hydroxy-3-methylbut-2-enyl diphosphate + 2 reduced [2Fe-2S]-[ferredoxin] + 2 H(+). Its pathway is isoprenoid biosynthesis; dimethylallyl diphosphate biosynthesis; dimethylallyl diphosphate from (2E)-4-hydroxy-3-methylbutenyl diphosphate: step 1/1. The protein operates within isoprenoid biosynthesis; isopentenyl diphosphate biosynthesis via DXP pathway; isopentenyl diphosphate from 1-deoxy-D-xylulose 5-phosphate: step 6/6. Catalyzes the conversion of 1-hydroxy-2-methyl-2-(E)-butenyl 4-diphosphate (HMBPP) into a mixture of isopentenyl diphosphate (IPP) and dimethylallyl diphosphate (DMAPP). Acts in the terminal step of the DOXP/MEP pathway for isoprenoid precursor biosynthesis. This Rhizobium rhizogenes (strain K84 / ATCC BAA-868) (Agrobacterium radiobacter) protein is 4-hydroxy-3-methylbut-2-enyl diphosphate reductase.